Here is a 362-residue protein sequence, read N- to C-terminus: Protein OCA4 (362 aa).

Required for replication of Brome mosaic virus (BMV). This chain is Protein OCA4 (OCA4), found in Saccharomyces cerevisiae (strain ATCC 204508 / S288c) (Baker's yeast).